Consider the following 384-residue polypeptide: Galactokinase (384 aa).

34–37 (EHTD) lines the substrate pocket. Position 123–129 (123–129 (SSGLSSS)) interacts with ATP. Serine 129 and glutamate 161 together coordinate Mg(2+). Aspartate 173 acts as the Proton acceptor in catalysis. Tyrosine 222 lines the substrate pocket.

This sequence belongs to the GHMP kinase family. GalK subfamily.

It is found in the cytoplasm. The catalysed reaction is alpha-D-galactose + ATP = alpha-D-galactose 1-phosphate + ADP + H(+). Its pathway is carbohydrate metabolism; galactose metabolism. Functionally, catalyzes the transfer of the gamma-phosphate of ATP to D-galactose to form alpha-D-galactose-1-phosphate (Gal-1-P). In Actinobacillus pleuropneumoniae serotype 5b (strain L20), this protein is Galactokinase.